Consider the following 244-residue polypeptide: MKHILLITGAGKGIGRAIALEFARAARHHPDFEPVLVLSSRTAADLEKISLECRAEGALTDTITADISDMADVRRLTTHIVERYGHIDCLVNNAGVGRFGALSDLTEEDFDYTMNTNLKGTFFLTQALFALMERQHSGHIFFITSVAATKAFRHSSIYCMSKFGQRGLVETMRLYARKCNVRITDVQPGAVYTPMWGKVDDEMQALMMMPEDIAAPVVQAYLQPSRTVVEEIILRPTSGDIQDD.

NADP(+) is bound by residues 9–15, 40–42, 66–67, and Asn-93; these read GAGKGIG, SRT, and DI. Phe-99 lines the substrate pocket. Thr-116 provides a ligand contact to NADP(+). The substrate site is built by Ser-145 and Tyr-158. NADP(+) contacts are provided by residues Tyr-158, Lys-162, and 191-196; that span reads VYTPMW. Trp-196 contacts substrate.

It belongs to the short-chain dehydrogenases/reductases (SDR) family. Homodimer.

The protein resides in the cytoplasm. It carries out the reaction L-threo-7,8-dihydrobiopterin + NADP(+) = L-sepiapterin + NADPH + H(+). The enzyme catalyses L-threo-tetrahydrobiopterin + 2 NADP(+) = 6-pyruvoyl-5,6,7,8-tetrahydropterin + 2 NADPH + 2 H(+). With respect to regulation, slightly inhibited by N-acetyldopamine but not by N-acetylserotonin or melatonin. Catalyzes the final reductions in tetra-hydrobiopterin biosynthesis to form 5,6,7,8-tetrahydrobiopterin. This chain is Sepiapterin reductase, found in Chlorobaculum tepidum (strain ATCC 49652 / DSM 12025 / NBRC 103806 / TLS) (Chlorobium tepidum).